Here is a 284-residue protein sequence, read N- to C-terminus: Deoxyribonuclease-1 (284 aa).

The first 22 residues, 1–22 (MRGARLMGALLALAGLLQGALA), serve as a signal peptide directing secretion. Asparagine 40 is a glycosylation site (N-linked (GlcNAc...) asparagine). Residue glutamate 100 is part of the active site. A disulfide bridge connects residues cysteine 123 and cysteine 126. Asparagine 128 is a glycosylation site (N-linked (GlcNAc...) asparagine). Histidine 156 is a catalytic residue. An intrachain disulfide couples cysteine 195 to cysteine 231.

The protein belongs to the DNase I family. Requires Ca(2+) as cofactor. The cofactor is Mg(2+). As to expression, highest expression in pancreas.

The protein resides in the secreted. Its subcellular location is the zymogen granule. It localises to the nucleus envelope. It catalyses the reaction Endonucleolytic cleavage to 5'-phosphodinucleotide and 5'-phosphooligonucleotide end-products.. Functionally, serum endocuclease secreted into body fluids by a wide variety of exocrine and endocrine organs. Expressed by non-hematopoietic tissues and preferentially cleaves protein-free DNA. Among other functions, seems to be involved in cell death by apoptosis. Binds specifically to G-actin and blocks actin polymerization. Together with DNASE1L3, plays a key role in degrading neutrophil extracellular traps (NETs). NETs are mainly composed of DNA fibers and are released by neutrophils to bind pathogens during inflammation. Degradation of intravascular NETs by DNASE1 and DNASE1L3 is required to prevent formation of clots that obstruct blood vessels and cause organ damage following inflammation. The polypeptide is Deoxyribonuclease-1 (DNASE1) (Canis lupus familiaris (Dog)).